We begin with the raw amino-acid sequence, 129 residues long: Histone H2B.2 (129 aa).

A compositionally biased stretch (basic and acidic residues) spans 1–19 (MAPKAEKKPASKAPAEKKP). Residues 1 to 37 (MAPKAEKKPASKAPAEKKPAAKKTASSDSKKRTKTRK) are disordered. Lysine 7 and lysine 8 each carry N6-acetyllysine; alternate. Residues lysine 7 and lysine 8 each participate in a glycyl lysine isopeptide (Lys-Gly) (interchain with G-Cter in SUMO); alternate cross-link. Serine 11 carries the post-translational modification Phosphoserine. Lysine 12 carries the N6-acetyllysine modification. Lysine 17 carries the N6-acetyllysine; alternate modification. Lysine 17 is covalently cross-linked (Glycyl lysine isopeptide (Lys-Gly) (interchain with G-Cter in SUMO); alternate). Residue lysine 18 forms a Glycyl lysine isopeptide (Lys-Gly) (interchain with G-Cter in SUMO) linkage. Lysine 123 participates in a covalent cross-link: Glycyl lysine isopeptide (Lys-Gly) (interchain with G-Cter in ubiquitin).

Belongs to the histone H2B family. In terms of assembly, the nucleosome is a histone octamer containing two molecules each of H2A, H2B, H3 and H4 assembled in one H3-H4 heterotetramer and two H2A-H2B heterodimers. The octamer wraps approximately 147 bp of DNA. In terms of processing, monoubiquitinated by the UBC2-BRE1 complex to form H2BK123ub1. H2BK123ub1 gives a specific tag for epigenetic transcriptional activation and is also prerequisite for H3K4me and H3K79me formation. H2BK123ub1 also modulates the formation of double-strand breaks during meiosis and is a prerequisite for DNA-damage checkpoint activation. Post-translationally, phosphorylated by STE20 to form H2BS10ph during progression through meiotic prophase. May be correlated with chromosome condensation. Acetylated by GCN5 to form H2BK11ac and H2BK16ac. H2BK16ac can also be formed by ESA1. Acetylation of N-terminal lysines and particularly formation of H2BK11acK16ac has a positive effect on transcription. In terms of processing, sumoylation to form H2BK6su or H2BK7su, and probably also H2BK16su or H2BK17su, occurs preferentially near the telomeres and represses gene transcription.

The protein resides in the nucleus. It localises to the chromosome. Its function is as follows. Core component of nucleosome. Nucleosomes wrap and compact DNA into chromatin, limiting DNA accessibility to the cellular machineries which require DNA as a template. Histones thereby play a central role in transcription regulation, DNA repair, DNA replication and chromosomal stability. DNA accessibility is regulated via a complex set of post-translational modifications of histones, also called histone code, and nucleosome remodeling. The chain is Histone H2B.2 (HTB2) from Meyerozyma guilliermondii (strain ATCC 6260 / CBS 566 / DSM 6381 / JCM 1539 / NBRC 10279 / NRRL Y-324) (Yeast).